The primary structure comprises 141 residues: Lutropin subunit beta (141 aa).

The N-terminal stretch at 1 to 20 is a signal peptide; the sequence is MERLQGLLLWLLLSPSVVWA. Disulfide bonds link cysteine 29–cysteine 77, cysteine 43–cysteine 92, cysteine 54–cysteine 108, cysteine 58–cysteine 110, and cysteine 113–cysteine 120. N-linked (GlcNAc...) asparagine glycosylation is present at asparagine 33.

It belongs to the glycoprotein hormones subunit beta family. In terms of assembly, heterodimer of a common alpha chain and a unique beta chain which confers biological specificity to thyrotropin, lutropin, follitropin and gonadotropin.

It is found in the secreted. Promotes spermatogenesis and ovulation by stimulating the testes and ovaries to synthesize steroids. The chain is Lutropin subunit beta (Lhb) from Mus musculus (Mouse).